A 471-amino-acid polypeptide reads, in one-letter code: Glutamate--tRNA ligase (471 aa).

A 'HIGH' region motif is present at residues P9 to G19. Residues C98, C100, C125, and H127 each contribute to the Zn(2+) site. The short motif at K237 to R241 is the 'KMSKS' region element. ATP is bound at residue K240.

This sequence belongs to the class-I aminoacyl-tRNA synthetase family. Glutamate--tRNA ligase type 1 subfamily. Monomer. It depends on Zn(2+) as a cofactor.

It localises to the cytoplasm. It carries out the reaction tRNA(Glu) + L-glutamate + ATP = L-glutamyl-tRNA(Glu) + AMP + diphosphate. Catalyzes the attachment of glutamate to tRNA(Glu) in a two-step reaction: glutamate is first activated by ATP to form Glu-AMP and then transferred to the acceptor end of tRNA(Glu). The polypeptide is Glutamate--tRNA ligase (Salmonella dublin (strain CT_02021853)).